Here is a 147-residue protein sequence, read N- to C-terminus: Small ribosomal subunit protein uS5 (147 aa).

Residues 9 to 72 form the S5 DRBM domain; the sequence is FEEVIVDIGR…DDAFKNIIHV (64 aa).

This sequence belongs to the universal ribosomal protein uS5 family. As to quaternary structure, part of the 30S ribosomal subunit. Contacts proteins S4 and S8.

Functionally, with S4 and S12 plays an important role in translational accuracy. Its function is as follows. Located at the back of the 30S subunit body where it stabilizes the conformation of the head with respect to the body. This Campylobacter curvus (strain 525.92) protein is Small ribosomal subunit protein uS5.